The sequence spans 255 residues: Snake venom serine protease HS112 (255 aa).

An N-terminal signal peptide occupies residues 1–18 (MVLIRVIANLLILQLSYA). The propeptide occupies 19 to 24 (QKSSEL). Residues 25-246 (VIGGDECDIN…YLPWIQSIIA (222 aa)) enclose the Peptidase S1 domain. 6 disulfide bridges follow: Cys31/Cys162, Cys49/Cys65, Cys97/Cys253, Cys141/Cys207, Cys173/Cys186, and Cys197/Cys222. Residues His64 and Asp109 each act as charge relay system in the active site. An N-linked (GlcNAc...) asparagine glycan is attached at Asn169. The active-site Charge relay system is the Ser201. Asn248 carries an N-linked (GlcNAc...) asparagine glycan.

This sequence belongs to the peptidase S1 family. Snake venom subfamily. Monomer. Expressed by the venom gland.

It is found in the secreted. Functionally, snake venom serine protease that may act in the hemostasis system of the prey. The sequence is that of Snake venom serine protease HS112 from Bothrops jararaca (Jararaca).